The primary structure comprises 350 residues: Protein pelota homolog (350 aa).

Belongs to the eukaryotic release factor 1 family. Pelota subfamily. As to quaternary structure, monomer. The cofactor is a divalent metal cation.

The protein localises to the cytoplasm. Its function is as follows. May function in recognizing stalled ribosomes, interact with stem-loop structures in stalled mRNA molecules, and effect endonucleolytic cleavage of the mRNA. May play a role in the release non-functional ribosomes and degradation of damaged mRNAs. Has endoribonuclease activity. This Methanosarcina mazei (strain ATCC BAA-159 / DSM 3647 / Goe1 / Go1 / JCM 11833 / OCM 88) (Methanosarcina frisia) protein is Protein pelota homolog.